Consider the following 89-residue polypeptide: Small ribosomal subunit protein uS15 (89 aa).

This sequence belongs to the universal ribosomal protein uS15 family. As to quaternary structure, part of the 30S ribosomal subunit. Forms a bridge to the 50S subunit in the 70S ribosome, contacting the 23S rRNA.

Its function is as follows. One of the primary rRNA binding proteins, it binds directly to 16S rRNA where it helps nucleate assembly of the platform of the 30S subunit by binding and bridging several RNA helices of the 16S rRNA. Forms an intersubunit bridge (bridge B4) with the 23S rRNA of the 50S subunit in the ribosome. The sequence is that of Small ribosomal subunit protein uS15 from Streptococcus thermophilus (strain CNRZ 1066).